The primary structure comprises 126 residues: Large ribosomal subunit protein bL17 (126 aa).

The protein belongs to the bacterial ribosomal protein bL17 family. As to quaternary structure, part of the 50S ribosomal subunit. Contacts protein L32.

This Magnetococcus marinus (strain ATCC BAA-1437 / JCM 17883 / MC-1) protein is Large ribosomal subunit protein bL17.